Here is a 107-residue protein sequence, read N- to C-terminus: Frataxin (107 aa).

This sequence belongs to the frataxin family. Monomer.

It is found in the cytoplasm. Functionally, promotes the assembly and repair of iron-sulfur clusters by delivering Fe(2+) to proteins involved in these pathways. In Trachipleistophora hominis (Microsporidian parasite), this protein is Frataxin (YFH1).